Reading from the N-terminus, the 606-residue chain is 4-hydroxy-3-methylbut-2-en-1-yl diphosphate synthase (flavodoxin) (606 aa).

4 residues coordinate [4Fe-4S] cluster: cysteine 513, cysteine 516, cysteine 547, and glutamate 554.

Belongs to the IspG family. The cofactor is [4Fe-4S] cluster.

The enzyme catalyses (2E)-4-hydroxy-3-methylbut-2-enyl diphosphate + oxidized [flavodoxin] + H2O + 2 H(+) = 2-C-methyl-D-erythritol 2,4-cyclic diphosphate + reduced [flavodoxin]. It participates in isoprenoid biosynthesis; isopentenyl diphosphate biosynthesis via DXP pathway; isopentenyl diphosphate from 1-deoxy-D-xylulose 5-phosphate: step 5/6. In terms of biological role, converts 2C-methyl-D-erythritol 2,4-cyclodiphosphate (ME-2,4cPP) into 1-hydroxy-2-methyl-2-(E)-butenyl 4-diphosphate. This chain is 4-hydroxy-3-methylbut-2-en-1-yl diphosphate synthase (flavodoxin), found in Chlamydia felis (strain Fe/C-56) (Chlamydophila felis).